We begin with the raw amino-acid sequence, 38 residues long: Large ribosomal subunit protein bL36 (38 aa).

This sequence belongs to the bacterial ribosomal protein bL36 family.

This is Large ribosomal subunit protein bL36 from Buchnera aphidicola subsp. Baizongia pistaciae (strain Bp).